The primary structure comprises 292 residues: Calcium-binding protein CBP (292 aa).

Residues methionine 1 to proline 80 are disordered. A compositionally biased stretch (gly residues) spans tyrosine 12–glycine 21. The segment covering alanine 22–alanine 40 has biased composition (pro residues). EF-hand domains are found at residues glycine 121–serine 156 and tyrosine 187–serine 222. The Ca(2+) site is built by aspartate 134, aspartate 136, serine 138, methionine 140, glutamate 145, aspartate 200, aspartate 202, serine 204, lysine 206, and glutamate 211.

In terms of biological role, potential calcium sensor. The sequence is that of Calcium-binding protein CBP from Oryza sativa subsp. japonica (Rice).